We begin with the raw amino-acid sequence, 144 residues long: Large ribosomal subunit protein uL16 (144 aa).

The segment covering Met-1 to Arg-16 has biased composition (basic residues). Positions Met-1–Lys-23 are disordered.

Belongs to the universal ribosomal protein uL16 family. In terms of assembly, part of the 50S ribosomal subunit.

Binds 23S rRNA and is also seen to make contacts with the A and possibly P site tRNAs. This Pelotomaculum thermopropionicum (strain DSM 13744 / JCM 10971 / SI) protein is Large ribosomal subunit protein uL16.